We begin with the raw amino-acid sequence, 194 residues long: MEHIKISDAAQAHFRKLLESQEEGTNIRIFVVNPGTPNAECGVSYCPPSNVEENDSELKFNGFSAFIDDISYPFLEDAEIDYVTEELGTQLTLKAPNAKMRKVADDAPLIERVDYVIQTQINPQLASHGGRITLIEITDDGYAVLQFGGGCNGCSMVDVTLKDGVEKQLVEMFNGELKGAKDITEHQRGEHSYY.

[4Fe-4S] cluster-binding residues include cysteine 151 and cysteine 154.

Belongs to the NfuA family. Homodimer. Requires [4Fe-4S] cluster as cofactor.

Its function is as follows. Involved in iron-sulfur cluster biogenesis. Binds a 4Fe-4S cluster, can transfer this cluster to apoproteins, and thereby intervenes in the maturation of Fe/S proteins. Could also act as a scaffold/chaperone for damaged Fe/S proteins. The polypeptide is Fe/S biogenesis protein NfuA (Actinobacillus succinogenes (strain ATCC 55618 / DSM 22257 / CCUG 43843 / 130Z)).